The following is a 4882-amino-acid chain: Dual E2 ubiquitin-conjugating enzyme/E3 ubiquitin-protein ligase BIRC6 (4882 aa).

WD repeat units follow at residues 71-109 and 110-139; these read DGLH…QASA and LSAK…AVGC. A BIR repeat occupies 292 to 362; that stretch reads RRETFTSWPH…RHSPNCPFVK (71 aa). Zn(2+) contacts are provided by cysteine 331, cysteine 334, histidine 351, and cysteine 358. Residues 382-429 form a WD 3 repeat; sequence LPSADGADRIACFGSGSCPQFLAAATKRGKICIWDVSKLMKVHLKFEI. Disordered stretches follow at residues 468–502, 542–561, and 582–622; these read DIPK…SQKE, GANP…KHQE, and ATSP…SELN. The segment covering 475 to 485 has biased composition (acidic residues); sequence DSDDLLEDSDS. A phosphoserine mark is found at serine 476, serine 483, and serine 485. 4 WD repeats span residues 504-723, 733-854, 855-931, and 932-970; these read MEVS…VQCL, TLCI…QHIK, DPQD…AKVE, and PPKK…FLQI. A compositionally biased stretch (basic and acidic residues) spans 551–561; sequence KSEKTKEKHQE. Positions 582-591 are enriched in polar residues; it reads ATSPISSNSH. Residues serine 584 and serine 593 each carry the phosphoserine modification. Polar residues predominate over residues 598 to 622; sequence SRTQGESISEQGSTDNESCTNSELN. The interval 1057-1077 is disordered; that stretch reads QQQRRHPQHLHQQHHGDAAQH. The segment covering 1060-1069 has biased composition (basic residues); that stretch reads RRHPQHLHQQ. Position 1724 is a phosphothreonine (threonine 1724). Residues serine 2245 and serine 2978 each carry the phosphoserine modification. Residues 2969 to 2998 form a disordered region; it reads VTTNTTDSVSDEEKVSGGKDVNGSSASTPG. The interval 3212-3216 is HRRAR loop; important for DIABLO/SMAC and HTRA2 binding; it reads HRRAR. Residues 3842-4092 enclose the Ubiquitin-like domain; the sequence is DEKVTMFLQS…ESLLETCPIQ (251 aa). 2 disordered regions span residues 3908-3927 and 3943-3973; these read SEQK…KVKA and LKSQ…IGSA. Threonine 3954 carries the post-translational modification Phosphothreonine. Serine 4047 bears the Phosphoserine mark. The tract at residues 4285-4304 is disordered; it reads VPNSSLSQTEPQVSNSHNPT. Positions 4286-4304 are enriched in polar residues; that stretch reads PNSSLSQTEPQVSNSHNPT. A UBC core domain is found at 4598-4765; sequence ARARRLAQEA…IRQATVKWAM (168 aa). Cysteine 4691 (glycyl thioester intermediate) is an active-site residue. The tract at residues 4857 to 4882 is disordered; it reads AGAEDTLTHDHVNPSSSKDLPSDFQL. Residues 4869–4882 are compositionally biased toward polar residues; the sequence is NPSSSKDLPSDFQL.

It belongs to the BIRC6 family. As to quaternary structure, homodimer; antiparallel. Interacts with DIABLO/SMAC, likely with higher affinity to SMAC dimer than SMAC monomer; this interaction blocks the substrate-binding site and inhibits the caspase inhibition activity of BIRC6. Interacts with RNF41, KIF23/MKLP1, USP8/UBPY, BIRC5/survivin, MAP2K1/MEK1, RAB8A/RAB8, RAB11A/RAB11, PLK1, EXOC3/SEC6 and EXOC4/SEC8. Post-translationally, ubiquitinated. Ubiquitination is mediated by RNF41 E3 ligase and leads to proteasomal degradation, impairing inhibition of apoptosis. Deubiquitinated by USP8/UBPY. Autoubiquitinated; mediated by E1 ubiquitin activating enzyme UBA6. In terms of processing, proteolytically cleaved. Acts as substrate for CASP3, CASP6, CASP7, CASP9 and HTRA2. As to expression, widely expressed. Highly expressed in the brain and kidney.

The protein resides in the golgi apparatus. The protein localises to the trans-Golgi network membrane. It is found in the endosome. It localises to the cytoplasm. Its subcellular location is the cytoskeleton. The protein resides in the spindle pole. The protein localises to the microtubule organizing center. It is found in the centrosome. It localises to the midbody. Its subcellular location is the midbody ring. The catalysed reaction is S-ubiquitinyl-[E1 ubiquitin-activating enzyme]-L-cysteine + [acceptor protein]-L-lysine = [E1 ubiquitin-activating enzyme]-L-cysteine + N(6)-monoubiquitinyl-[acceptor protein]-L-lysine.. With respect to regulation, inhibited by DIABLO/SMAC, which competes for the substrate-binding sites on BIRC6. BIRC6 inhibits caspases and protease by ubiquitination but BIRC6 itself is subjected to protease cleavage by CASP3, CASP6, CASP7, CASP9 and HTRA2 by protease cleavage. Its function is as follows. Anti-apoptotic protein known as inhibitor of apoptosis (IAP) which can regulate cell death by controlling caspases and by acting as an E3 ubiquitin-protein ligase. Unlike most IAPs, does not contain a RING domain and it is not a RING-type E3 ligase. Instead acts as a dual E2/E3 enzyme that combines ubiquitin conjugating (E2) and ubiquitin ligase (E3) activities in a single polypeptide. Ubiquitination is mediated by a non-canonical E1 ubiquitin activating enzyme UBA6. Ubiquitinates CASP3, CASP7 and CASP9 and inhibits their caspase activity; also ubiquitinates their procaspases but to a weaker extent. Ubiquitinates pro-apoptotic factors DIABLO/SMAC and HTRA2. DIABLO/SMAC antagonizes the caspase inhibition activity of BIRC6 by competing for the same binding sites as the caspases. Ubiquitinates the autophagy protein MAP1LC3B; this activity is also inhibited by DIABLO/SMAC. Important regulator for the final stages of cytokinesis. Crucial for normal vesicle targeting to the site of abscission, but also for the integrity of the midbody and the midbody ring, and its striking ubiquitin modification. Required for normal placenta development. The polypeptide is Dual E2 ubiquitin-conjugating enzyme/E3 ubiquitin-protein ligase BIRC6 (Birc6) (Mus musculus (Mouse)).